We begin with the raw amino-acid sequence, 692 residues long: Glycine--tRNA ligase beta subunit (692 aa).

The protein belongs to the class-II aminoacyl-tRNA synthetase family. Tetramer of two alpha and two beta subunits.

It is found in the cytoplasm. It carries out the reaction tRNA(Gly) + glycine + ATP = glycyl-tRNA(Gly) + AMP + diphosphate. This chain is Glycine--tRNA ligase beta subunit, found in Limosilactobacillus fermentum (strain NBRC 3956 / LMG 18251) (Lactobacillus fermentum).